The sequence spans 450 residues: MGRRLFGTDGLRGQVNIYPMTADMALRLGLAAGTRFRNGNRRHRVVIGKDTRLSGYMFESALTAGLCAAGMDVFQVGPLPTPAISFLTRNMRADLGVVISASHNPFMDNGIKFFDRSGFKLPDDVENQMTDMVLDPDWQWDYPASEKVGRAYKIADAPGRYIVYIKSSFPADLTLDGLRVVIDCANGANYKVAPLALEELGAEVIKLGTEPNGLNINHQCGSLYPEVVAAKVRETRADIGLALDGDADRLIVVDEKGTILDGDQIMALCAQDLMAKGKLPGNMLVATVMSNMALEVFMKEHGGTLLRTAVGDRYVVEAMRQHGALLGGEQSGHLIFREYSTTGDGLLAALQILRIMRERGKPLSELAGQLQLFPQQLINVHVERKIPFAECQPVADAVAAIETELGDRGRVLLRYSGTESVCRVMVEGEHPEQVARLAEMLAETVQKHLR.

Residue Ser-102 is the Phosphoserine intermediate of the active site. Ser-102, Asp-244, Asp-246, and Asp-248 together coordinate Mg(2+). Ser-102 is modified (phosphoserine).

The protein belongs to the phosphohexose mutase family. Mg(2+) is required as a cofactor. Activated by phosphorylation.

The catalysed reaction is alpha-D-glucosamine 1-phosphate = D-glucosamine 6-phosphate. In terms of biological role, catalyzes the conversion of glucosamine-6-phosphate to glucosamine-1-phosphate. This is Phosphoglucosamine mutase from Nitratidesulfovibrio vulgaris (strain ATCC 29579 / DSM 644 / CCUG 34227 / NCIMB 8303 / VKM B-1760 / Hildenborough) (Desulfovibrio vulgaris).